A 505-amino-acid polypeptide reads, in one-letter code: tRNA (guanine(6)-N(2))-methyltransferase THUMP3 (505 aa).

Residues K145–S182 are disordered. A compositionally biased stretch (basic and acidic residues) spans G156–G173. In terms of domain architecture, THUMP spans K171 to L287.

It belongs to the methyltransferase superfamily. As to quaternary structure, part of the heterodimeric THUMPD3-TRM112 methyltransferase complex; this complex forms an active tRNA methyltransferase, where TRMT112 acts as an activator of the catalytic subunit THUMPD3. In terms of tissue distribution, ubiquitously expressed. Abundantly expressed in the testis, also expressed in the brain, heart, kidney, liver, lung, muscle and spleen.

It localises to the cytoplasm. The catalysed reaction is guanosine(6) in tRNA + S-adenosyl-L-methionine = N(2)-methylguanosine(6) in tRNA + S-adenosyl-L-homocysteine + H(+). It catalyses the reaction guanosine(7) in tRNA + S-adenosyl-L-methionine = N(2)-methylguanosine(7) in tRNA + S-adenosyl-L-homocysteine + H(+). Its function is as follows. Catalytic subunit of the THUMPD3-TRM112 methyltransferase complex, that specifically mediates the S-adenosyl-L-methionine-dependent N(2)-methylation of guanosine nucleotide at position 6 (m2G6) in tRNAs. This is one of the major tRNA (guanine-N(2))-methyltransferases. Also catalyzes the S-adenosyl-L-methionine-dependent N(2)-methylation of guanosine nucleotide at position 7 of tRNA(Trp). This chain is tRNA (guanine(6)-N(2))-methyltransferase THUMP3, found in Mus musculus (Mouse).